We begin with the raw amino-acid sequence, 386 residues long: MNISNIKIMLLGSGELGKEFIIAAQRLGIHTIVVDRYKNAPAMQVAHESYVIDMLNSDALEQLILAKNPTYIVPEIEAINTDSLVKLEAHNFNIIPCAKATKLTMDRQGIRALAAQQLNLQTSKFAFANSEQEYLDVIQSIGLPFVIKPVMSSSGKGQSIVKEHNEIKKAWDYAQNGSRGHAKGVIVEQFIDFDYEITLLTVRHKDGTSFCDPIGHIQKDGDYRFSWQPHTMPDTALAKSQEIAKEITDALGGYGVFGVELFIKGDEVFFNEVSPRPHDTGMVTLISQNINEFELHLRAIVGLPIPDIQTLQPSASAAILLEGDTANASICGIDKALADANVDIRIFGKKEIHGKRRMGVVLAKAQNTHIALETSKQALAHIHLTK.

N(1)-(5-phospho-beta-D-ribosyl)glycinamide contacts are provided by residues 15–16 (EL) and Glu75. ATP-binding positions include Arg107, Lys148, 153–158 (SSGKGQ), 188–191 (EQFI), and Glu196. Residues 112 to 301 (ALAAQQLNLQ…EFELHLRAIV (190 aa)) form the ATP-grasp domain. The Mg(2+) site is built by Glu260 and Glu272. N(1)-(5-phospho-beta-D-ribosyl)glycinamide contacts are provided by residues Asp279, Lys349, and 356 to 357 (RR).

Belongs to the PurK/PurT family. Homodimer.

It catalyses the reaction N(1)-(5-phospho-beta-D-ribosyl)glycinamide + formate + ATP = N(2)-formyl-N(1)-(5-phospho-beta-D-ribosyl)glycinamide + ADP + phosphate + H(+). The protein operates within purine metabolism; IMP biosynthesis via de novo pathway; N(2)-formyl-N(1)-(5-phospho-D-ribosyl)glycinamide from N(1)-(5-phospho-D-ribosyl)glycinamide (formate route): step 1/1. Functionally, involved in the de novo purine biosynthesis. Catalyzes the transfer of formate to 5-phospho-ribosyl-glycinamide (GAR), producing 5-phospho-ribosyl-N-formylglycinamide (FGAR). Formate is provided by PurU via hydrolysis of 10-formyl-tetrahydrofolate. The sequence is that of Formate-dependent phosphoribosylglycinamide formyltransferase from Francisella tularensis subsp. tularensis (strain WY96-3418).